The following is a 141-amino-acid chain: Large ribosomal subunit protein uL11 (141 aa).

The protein belongs to the universal ribosomal protein uL11 family. As to quaternary structure, part of the ribosomal stalk of the 50S ribosomal subunit. Interacts with L10 and the large rRNA to form the base of the stalk. L10 forms an elongated spine to which L12 dimers bind in a sequential fashion forming a multimeric L10(L12)X complex. In terms of processing, one or more lysine residues are methylated.

In terms of biological role, forms part of the ribosomal stalk which helps the ribosome interact with GTP-bound translation factors. This chain is Large ribosomal subunit protein uL11, found in Herpetosiphon aurantiacus (strain ATCC 23779 / DSM 785 / 114-95).